Reading from the N-terminus, the 144-residue chain is Large ribosomal subunit protein uL15 (144 aa).

The segment at 1–25 (MFLNTIGARDGSRPEKKRVGRGIGS) is disordered.

This sequence belongs to the universal ribosomal protein uL15 family. As to quaternary structure, part of the 50S ribosomal subunit.

Its function is as follows. Binds to the 23S rRNA. This chain is Large ribosomal subunit protein uL15, found in Methylococcus capsulatus (strain ATCC 33009 / NCIMB 11132 / Bath).